Here is a 459-residue protein sequence, read N- to C-terminus: Glutamyl-tRNA(Gln) amidotransferase subunit A, mitochondrial (459 aa).

Active-site charge relay system residues include K37 and S114. S138 acts as the Acyl-ester intermediate in catalysis.

This sequence belongs to the amidase family. GatA subfamily. In terms of assembly, subunit of the heterotrimeric GatFAB amidotransferase (AdT) complex, composed of A, B and F subunits.

Its subcellular location is the mitochondrion. The catalysed reaction is L-glutamyl-tRNA(Gln) + L-glutamine + ATP + H2O = L-glutaminyl-tRNA(Gln) + L-glutamate + ADP + phosphate + H(+). In terms of biological role, allows the formation of correctly charged Gln-tRNA(Gln) through the transamidation of misacylated Glu-tRNA(Gln) in the mitochondria. The reaction takes place in the presence of glutamine and ATP through an activated gamma-phospho-Glu-tRNA(Gln). This chain is Glutamyl-tRNA(Gln) amidotransferase subunit A, mitochondrial, found in Yarrowia lipolytica (strain CLIB 122 / E 150) (Yeast).